The sequence spans 76 residues: UPF0154 protein Sca_0984 (76 aa).

Residues 4 to 24 (WLAILLIVAALIIGLVGGFFL) traverse the membrane as a helical segment.

Belongs to the UPF0154 family.

It is found in the cell membrane. In Staphylococcus carnosus (strain TM300), this protein is UPF0154 protein Sca_0984.